The primary structure comprises 71 residues: Small ribosomal subunit protein bS21 (71 aa).

Residues 48-59 (KAAAAVKRHAKK) are compositionally biased toward basic residues. The segment at 48–71 (KAAAAVKRHAKKVQREQRRRERLY) is disordered. The segment covering 60-71 (VQREQRRRERLY) has biased composition (basic and acidic residues).

Belongs to the bacterial ribosomal protein bS21 family.

This is Small ribosomal subunit protein bS21 from Azotobacter vinelandii (strain DJ / ATCC BAA-1303).